The primary structure comprises 84 residues: Large ribosomal subunit protein bL27 (84 aa).

Residues 1 to 23 (MAHKKGASSSRNGRESAAQRLGV) form a disordered region.

The protein belongs to the bacterial ribosomal protein bL27 family.

The chain is Large ribosomal subunit protein bL27 from Salinispora arenicola (strain CNS-205).